The chain runs to 595 residues: L-allo-isoleucine:holo-[CmaA peptidyl-carrier protein] ligase (595 aa).

The Carrier domain maps to 507 to 582 (VVSPQAGSAV…EWVQYYATHA (76 aa)). O-(pantetheine 4'-phosphoryl)serine is present on S542.

It belongs to the ATP-dependent AMP-binding enzyme family. As to quaternary structure, homodimer. It depends on pantetheine 4'-phosphate as a cofactor.

The enzyme catalyses L-alloisoleucine + holo-[CmaA peptidyl-carrier protein] + ATP = L-alloisoleucyl-[CmaA peptidyl-carrier protein] + AMP + diphosphate. Involved in the biosynthesis of the phytotoxin coronatine (COR) which mimics the plant hormone jasmonic acid isoleucine and promotes opening of stomata for bacterial entry, bacterial growth in the apoplast, systemic susceptibility, and disease symptoms. CmaA catalyzes the adenylation of L-allo-isoleucine (via the A domain) and the attachment of L-allo-isoleucine to the 4'-phosphopantetheine arm located within the T domain of CmaA. It can also use L-isoleucine, L-leucine and L-valine as substrates. The protein is L-allo-isoleucine:holo-[CmaA peptidyl-carrier protein] ligase of Pseudomonas savastanoi pv. glycinea (Pseudomonas syringae pv. glycinea).